Consider the following 378-residue polypeptide: Forkhead box protein F1 (378 aa).

Residues 1 to 45 are disordered; it reads MSAPDKQQPPHGGGTGGGGGAGGQAMDPAAAGPTKAKKTNAGVRR. Over residues 11-23 the composition is skewed to gly residues; it reads HGGGTGGGGGAGG. Residues 24 to 42 show a composition bias toward low complexity; sequence QAMDPAAAGPTKAKKTNAG. Positions 47-138 form a DNA-binding region, fork-head; it reads EKPPYSYIAL…EFMFEEGSFR (92 aa).

As to expression, expressed primarily in lung in alveolar type II pneumocyte cells, and to a lesser extent in placenta, stomach, intestine and colon.

It is found in the nucleus. In terms of biological role, probable transcription activator for a number of lung-specific genes. In Mus musculus (Mouse), this protein is Forkhead box protein F1 (Foxf1).